Reading from the N-terminus, the 185-residue chain is p53 apoptosis effector related to PMP-22 (185 aa).

4 helical membrane-spanning segments follow: residues 13–33 (WILP…IAAQ), 74–94 (VAAL…ISLV), 105–125 (LPFI…ALII), and 143–163 (WAYG…ILFC).

This sequence belongs to the TMEM47 family.

The protein localises to the cell junction. Its subcellular location is the desmosome. It is found in the cell membrane. It localises to the cytoplasm. Component of intercellular desmosome junctions. Positively regulates apoptosis in the early-stage embryo in response to UV irradiation, this is partially dependent on tp53 activation. Required for the survival of cell populations in the developing notochord and skin, therefore required for normal embryogenesis beyond 30 hpf. Acts as a positive regulator of endothelial cell apoptosis in response to blood flow-derived shear stress. This is p53 apoptosis effector related to PMP-22 from Danio rerio (Zebrafish).